We begin with the raw amino-acid sequence, 365 residues long: NAC domain-containing protein 37 (365 aa).

In terms of domain architecture, NAC spans 9–158 (VPPGFRFHPT…GWVVCRAFKK (150 aa)). A DNA-binding region spans residues 109-164 (IGMRKTLVFYKGRAPNGKKSDWIMHEYRLESDENAPPQEEGWVVCRAFKKRATGQA).

The protein belongs to the plant vascular related NAC-domain protein family. In terms of assembly, interacts with NAC030/VND7. In terms of tissue distribution, expressed in root metaxylem pole and in shoot pre-procambium and procambium. Present in root developing xylems. Specifically expressed in vessels but not in interfascicular fibers in stems.

The protein localises to the nucleus. Functionally, transcription activator that binds to the secondary wall NAC binding element (SNBE), 5'-(T/A)NN(C/T)(T/C/G)TNNNNNNNA(A/C)GN(A/C/T)(A/T)-3', in the promoter of target genes. Involved in xylem formation by promoting the expression of secondary wall-associated transcription factors and of genes involved in secondary wall biosynthesis and programmed cell death, genes driven by the secondary wall NAC binding element (SNBE). Triggers thickening of secondary walls. The protein is NAC domain-containing protein 37 of Arabidopsis thaliana (Mouse-ear cress).